The following is a 764-amino-acid chain: Polyribonucleotide nucleotidyltransferase (764 aa).

D555 and D561 together coordinate Mg(2+). A KH domain is found at 621–680; that stretch reads PHITSINIPQNKIGEVIGPKGKTINQITEETGANITIEDDGTVFISAVGGESAREAEEKI. Positions 692–761 constitute an S1 motif domain; that stretch reads GDRFLGTVVK…NRGKISLVLV (70 aa).

It belongs to the polyribonucleotide nucleotidyltransferase family. It depends on Mg(2+) as a cofactor.

It is found in the cytoplasm. It catalyses the reaction RNA(n+1) + phosphate = RNA(n) + a ribonucleoside 5'-diphosphate. Functionally, involved in mRNA degradation. Catalyzes the phosphorolysis of single-stranded polyribonucleotides processively in the 3'- to 5'-direction. The sequence is that of Polyribonucleotide nucleotidyltransferase from Corynebacterium jeikeium (strain K411).